The primary structure comprises 612 residues: Chaperone protein DnaK (612 aa).

T174 is subject to Phosphothreonine; by autocatalysis. The tract at residues 578 to 612 (GGQTGGATNTDSAGQGTTQDNVYEANYKVEDDDNK) is disordered. A compositionally biased stretch (polar residues) spans 586-598 (NTDSAGQGTTQDN).

It belongs to the heat shock protein 70 family.

Functionally, acts as a chaperone. The sequence is that of Chaperone protein DnaK from Thermoanaerobacter sp. (strain X514).